The chain runs to 83 residues: Ardiscretin (83 aa).

Positions 1–20 (MKGMIMLISCLMLIDVVVES) are cleaved as a signal peptide. The region spanning 21 to 82 (KNGYIIEPKG…IFDYYNNKCG (62 aa)) is the LCN-type CS-alpha/beta domain. Intrachain disulfides connect Cys-31–Cys-81, Cys-35–Cys-57, Cys-43–Cys-62, and Cys-47–Cys-64. Cys-81 bears the Cysteine amide mark.

In terms of tissue distribution, expressed by the venom gland.

Its subcellular location is the secreted. In terms of biological role, inhibits the sodium (Nav) currents in an apparent irreversible manner. Produces small depolarization and induces repetitive firing in squid axons. Is specific for arthropods (crickets, triatomides, crabs and squids), but is non-toxic to mice. Shows antibacterial activity against both Gram-positive and Gram-negative bacteria. The chain is Ardiscretin from Tityus discrepans (Venezuelan scorpion).